Here is a 111-residue protein sequence, read N- to C-terminus: ETFEIPESVTMSPKQFEGYTPKKGDVTFNHASHMDIACQQCHHTVPDTYTIESCMTEGCHDNIKERTEISSVYRTFHTTKDSEKSCVGCHRELKRQGPSDAPLACNSCHVQ.

16 residues coordinate heme c: histidine 30, histidine 33, cysteine 38, cysteine 41, histidine 42, histidine 43, cysteine 54, cysteine 59, histidine 60, histidine 77, cysteine 86, cysteine 89, histidine 90, cysteine 105, cysteine 108, and histidine 109.

Homodimer. Heme c is required as a cofactor.

Its subcellular location is the periplasm. Its function is as follows. Participates in sulfate respiration coupled with phosphorylation by transferring electrons from the enzyme dehydrogenase to ferredoxin. The polypeptide is Cytochrome c3, 26 kDa (Desulfomicrobium norvegicum (strain DSM 1741 / NCIMB 8310) (Desulfovibrio baculatus (strain Norway 4))).